Here is a 342-residue protein sequence, read N- to C-terminus: Dihydroorotate dehydrogenase (quinone) (342 aa).

FMN is bound by residues 60–64 and T84; that span reads AGLDK. Residue K64 participates in substrate binding. 109 to 113 is a substrate binding site; that stretch reads NRMGF. FMN contacts are provided by N137 and N170. Substrate is bound at residue N170. The active-site Nucleophile is the S173. N175 contributes to the substrate binding site. Positions 215 and 243 each coordinate FMN. Position 244–245 (244–245) interacts with substrate; that stretch reads NT. Residues G266, G295, and 316–317 each bind FMN; that span reads YS.

The protein belongs to the dihydroorotate dehydrogenase family. Type 2 subfamily. In terms of assembly, monomer. FMN is required as a cofactor.

It is found in the cell membrane. It catalyses the reaction (S)-dihydroorotate + a quinone = orotate + a quinol. Its pathway is pyrimidine metabolism; UMP biosynthesis via de novo pathway; orotate from (S)-dihydroorotate (quinone route): step 1/1. Functionally, catalyzes the conversion of dihydroorotate to orotate with quinone as electron acceptor. The polypeptide is Dihydroorotate dehydrogenase (quinone) (Nitrosomonas europaea (strain ATCC 19718 / CIP 103999 / KCTC 2705 / NBRC 14298)).